We begin with the raw amino-acid sequence, 78 residues long: Sec-independent protein translocase protein TatA (78 aa).

A helical transmembrane segment spans residues 1–21 (MGGISIWQLLIIAVIVVLLFG). The span at 47-59 (ESEKKDADFEPKS) shows a compositional bias: basic and acidic residues. A disordered region spans residues 47–78 (ESEKKDADFEPKSLEQQNKQAATESKKDKEQA). Over residues 60-69 (LEQQNKQAAT) the composition is skewed to polar residues.

It belongs to the TatA/E family. In terms of assembly, the Tat system comprises two distinct complexes: a TatABC complex, containing multiple copies of TatA, TatB and TatC subunits, and a separate TatA complex, containing only TatA subunits. Substrates initially bind to the TatABC complex, which probably triggers association of the separate TatA complex to form the active translocon.

It localises to the cell inner membrane. In terms of biological role, part of the twin-arginine translocation (Tat) system that transports large folded proteins containing a characteristic twin-arginine motif in their signal peptide across membranes. TatA could form the protein-conducting channel of the Tat system. This is Sec-independent protein translocase protein TatA from Vibrio vulnificus (strain YJ016).